The primary structure comprises 1093 residues: Phosphorylase b kinase regulatory subunit beta (1093 aa).

A2 is modified (N-acetylalanine). A4 carries the post-translational modification Phosphoserine. Positions L7 to Y29 are calmodulin-binding. S12 carries the post-translational modification Phosphoserine; by autocatalysis. S27 and S701 each carry phosphoserine. The tract at residues E689–I716 is disordered. Calmodulin-binding regions lie at residues R768–S795 and N920–R951. C1090 carries the S-farnesyl cysteine lipid modification.

Belongs to the phosphorylase b kinase regulatory chain family. As to quaternary structure, hexadecamer of 4 heterotetramers, each composed of alpha, beta, gamma, and delta subunits. Alpha (PHKA1 or PHKA2) and beta (PHKB) are regulatory subunits, gamma (PHKG1 or PHKG2) is the catalytic subunit, and delta is calmodulin. Ser-701 is probably phosphorylated by PKA. Post-translationally, although the final Cys may be farnesylated, the terminal tripeptide is probably not removed, and the C-terminus is not methylated.

The protein localises to the cell membrane. Its pathway is glycan biosynthesis; glycogen metabolism. With respect to regulation, by phosphorylation of various serine residues. In terms of biological role, phosphorylase b kinase catalyzes the phosphorylation of serine in certain substrates, including troponin I. The beta chain acts as a regulatory unit and modulates the activity of the holoenzyme in response to phosphorylation. This chain is Phosphorylase b kinase regulatory subunit beta (PHKB), found in Homo sapiens (Human).